A 462-amino-acid polypeptide reads, in one-letter code: Fumarate hydratase class II (462 aa).

Residues 97–99 (SGT), 127–130 (HPND), 137–139 (SSN), and T185 each bind substrate. Catalysis depends on H186, which acts as the Proton donor/acceptor. Residue S316 is part of the active site. Residues S317 and 322-324 (KVN) contribute to the substrate site.

Belongs to the class-II fumarase/aspartase family. Fumarase subfamily. In terms of assembly, homotetramer.

It localises to the cytoplasm. It catalyses the reaction (S)-malate = fumarate + H2O. The protein operates within carbohydrate metabolism; tricarboxylic acid cycle; (S)-malate from fumarate: step 1/1. Its function is as follows. Involved in the TCA cycle. Catalyzes the stereospecific interconversion of fumarate to L-malate. The chain is Fumarate hydratase class II from Bacillus cereus (strain ATCC 14579 / DSM 31 / CCUG 7414 / JCM 2152 / NBRC 15305 / NCIMB 9373 / NCTC 2599 / NRRL B-3711).